A 221-amino-acid polypeptide reads, in one-letter code: 7-cyano-7-deazaguanine synthase (221 aa).

10–20 (FSGGQDSTTCL) contacts ATP. Residues Cys-187, Cys-196, Cys-199, and Cys-202 each contribute to the Zn(2+) site.

The protein belongs to the QueC family. In terms of assembly, homodimer. It depends on Zn(2+) as a cofactor.

The catalysed reaction is 7-carboxy-7-deazaguanine + NH4(+) + ATP = 7-cyano-7-deazaguanine + ADP + phosphate + H2O + H(+). It participates in purine metabolism; 7-cyano-7-deazaguanine biosynthesis. Its function is as follows. Catalyzes the ATP-dependent conversion of 7-carboxy-7-deazaguanine (CDG) to 7-cyano-7-deazaguanine (preQ(0)). This chain is 7-cyano-7-deazaguanine synthase, found in Shouchella clausii (strain KSM-K16) (Alkalihalobacillus clausii).